A 262-amino-acid chain; its full sequence is Type III pantothenate kinase (262 aa).

6–13 (DVGNTNAV) contacts ATP. Substrate contacts are provided by residues Tyr100 and 107–110 (GADR). The active-site Proton acceptor is the Asp109. Residue Asp129 coordinates K(+). Thr132 serves as a coordination point for ATP. Residue Thr184 participates in substrate binding.

This sequence belongs to the type III pantothenate kinase family. As to quaternary structure, homodimer. It depends on NH4(+) as a cofactor. Requires K(+) as cofactor.

The protein resides in the cytoplasm. The enzyme catalyses (R)-pantothenate + ATP = (R)-4'-phosphopantothenate + ADP + H(+). Its pathway is cofactor biosynthesis; coenzyme A biosynthesis; CoA from (R)-pantothenate: step 1/5. Catalyzes the phosphorylation of pantothenate (Pan), the first step in CoA biosynthesis. The polypeptide is Type III pantothenate kinase (Bacillus cereus (strain G9842)).